Consider the following 297-residue polypeptide: UBX domain-containing protein 1 (297 aa).

At A2 the chain carries N-acetylalanine. The UBA domain occupies 2–42; sequence AELTALESLIEMGFPRGRAEKALALTGNQGIEAAMDWLMEH. The tract at residues 38 to 212 is disordered; the sequence is WLMEHEDDPD…QEPPTKREYD (175 aa). Over residues 42 to 52 the composition is skewed to acidic residues; sequence HEDDPDVDEPL. Positions 43–297 are interaction with BRCA1; sequence EDDPDVDEPL…VLIVAKKCPS (255 aa). 2 stretches are compositionally biased toward basic and acidic residues: residues 86–122 and 137–177; these read LTEE…EREK and KLQE…ERAQ. The stretch at 86–172 forms a coiled coil; that stretch reads LTEEERQEQT…RVREKIERDK (87 aa). S199 is modified (phosphoserine). A Phosphoserine; by MAPK12 modification is found at S200. Phosphothreonine is present on residues T207 and T229. The UBX domain occupies 209-291; the sequence is REYDQCRIQV…GLVPSAVLIV (83 aa). S270 carries the post-translational modification Phosphoserine.

In terms of assembly, component of a complex required to couple retrotranslocation, ubiquitination and deglycosylation composed of NGLY1, SAKS1, AMFR, VCP and RAD23B. Interacts with HOMER2. Interacts directly with VCP. Interacts with BRCA1 and BARD1; interaction takes place when BRCA1 is not autoubiquitinated bur is strongly enhanced in the presence of autoubiquitinated BRCA1.

The protein resides in the cytoplasm. Ubiquitin-binding protein that interacts with the BRCA1-BARD1 heterodimer, and regulates its activity. Specifically binds 'Lys-6'-linked polyubiquitin chains. Interaction with autoubiquitinated BRCA1, leads to inhibit the E3 ubiquitin-protein ligase activity of the BRCA1-BARD1 heterodimer. Component of a complex required to couple deglycosylation and proteasome-mediated degradation of misfolded proteins in the endoplasmic reticulum that are retrotranslocated in the cytosol. The sequence is that of UBX domain-containing protein 1 (Ubxn1) from Rattus norvegicus (Rat).